The chain runs to 620 residues: Probable potassium transport system protein Kup 2 (620 aa).

Helical transmembrane passes span 10–30 (LLVS…LYAL), 50–70 (VLSL…VIVI), 102–122 (MMLG…TPAI), 136–156 (PDLR…LFAI), 168–188 (FGPV…VNVI), 211–231 (LMSF…EALY), 246–266 (WFCL…ALLI), 284–304 (MVVP…QAVI), 336–356 (IYVP…VVGF), 368–388 (IAVT…MALL), 393–413 (MALV…FFSA), and 415–435 (IIKV…SFTV).

The protein belongs to the HAK/KUP transporter (TC 2.A.72) family.

Its subcellular location is the cell inner membrane. The enzyme catalyses K(+)(in) + H(+)(in) = K(+)(out) + H(+)(out). Its function is as follows. Transport of potassium into the cell. Likely operates as a K(+):H(+) symporter. The polypeptide is Probable potassium transport system protein Kup 2 (Rhodopseudomonas palustris (strain BisB5)).